The following is a 100-amino-acid chain: Integration host factor subunit beta (100 aa).

A disordered region spans residues leucine 53–serine 100. Basic and acidic residues predominate over residues proline 82–asparagine 91.

It belongs to the bacterial histone-like protein family. As to quaternary structure, heterodimer of an alpha and a beta chain.

Its function is as follows. This protein is one of the two subunits of integration host factor, a specific DNA-binding protein that functions in genetic recombination as well as in transcriptional and translational control. The protein is Integration host factor subunit beta of Alkalilimnicola ehrlichii (strain ATCC BAA-1101 / DSM 17681 / MLHE-1).